Here is a 396-residue protein sequence, read N- to C-terminus: Pre-mRNA-splicing regulator WTAP (396 aa).

Met1 bears the N-acetylmethionine mark. Residue Ser14 is modified to Phosphoserine. Composition is skewed to low complexity over residues 240–257 (QQQQSQASAPSTSRTTAS), 278–291 (SNGSSSRQRTSGSG), and 304–316 (PSSPGNGNKSSNS). The disordered stretch occupies residues 240-396 (QQQQSQASAP…SSVNVQGSVL (157 aa)). A phosphoserine mark is found at Ser305, Ser306, and Ser341. Residues 340–356 (DSPTGSENSLTHQSNDT) show a composition bias toward polar residues. Thr350 is modified (phosphothreonine). Positions 357–368 (DSSHDPQEEKAV) are enriched in basic and acidic residues. Polar residues predominate over residues 380–396 (HVQNGLDSSVNVQGSVL). A Phosphoserine modification is found at Ser388.

Belongs to the fl(2)d family. Component of the WMM complex, a N6-methyltransferase complex composed of a catalytic subcomplex, named MAC, and of an associated subcomplex, named MACOM. The MAC subcomplex is composed of METTL3 and METTL14. The MACOM subcomplex is composed of WTAP, ZC3H13, CBLL1/HAKAI, VIRMA, and, in some cases of RBM15 (RBM15 or RBM15B). Interacts with WT1. Also a component of a MACOM-like complex, named WTAP complex, composed of WTAP, ZC3H13, CBLL1, VIRMA, RBM15, BCLAF1 and THRAP3. In terms of tissue distribution, ubiquitously expressed.

It is found in the nucleus speckle. It localises to the nucleus. Its subcellular location is the nucleoplasm. The protein localises to the cytoplasm. Its function is as follows. Associated component of the WMM complex, a complex that mediates N6-methyladenosine (m6A) methylation of RNAs, a modification that plays a role in the efficiency of mRNA splicing and RNA processing. Required for accumulation of METTL3 and METTL14 to nuclear speckle. Acts as a mRNA splicing regulator. Regulates G2/M cell-cycle transition by binding to the 3' UTR of CCNA2, which enhances its stability. Impairs WT1 DNA-binding ability and inhibits expression of WT1 target genes. This chain is Pre-mRNA-splicing regulator WTAP, found in Homo sapiens (Human).